The primary structure comprises 144 residues: Large ribosomal subunit protein uL15 (144 aa).

The disordered stretch occupies residues 1 to 52; that stretch reads MRLNTLSPAEGAKHAPKRVGRGIGSGLGKTAGRGHKGQNSRSGGGVRRGFEG. Residues 21 to 31 show a composition bias toward gly residues; that stretch reads RGIGSGLGKTA.

Belongs to the universal ribosomal protein uL15 family. As to quaternary structure, part of the 50S ribosomal subunit.

In terms of biological role, binds to the 23S rRNA. In Yersinia enterocolitica serotype O:8 / biotype 1B (strain NCTC 13174 / 8081), this protein is Large ribosomal subunit protein uL15.